The primary structure comprises 444 residues: Forkhead box protein F2 (444 aa).

The tract at residues 32–98 (PAAAAAAAAA…KKASSGLRRP (67 aa)) is disordered. Over residues 34–75 (AAAAAAAAPETTSSSSSSSSASCASSSSSSNSASAPSAACKS) the composition is skewed to low complexity. Positions 76–87 (AGGGGAGAGSGG) are enriched in gly residues. A DNA-binding region (fork-head) is located at residues 99–190 (EKPPYSYIAL…EFMFEEGSFR (92 aa)). 2 disordered regions span residues 256–323 (GAGA…SPAM) and 338–367 (AHWSSPGASPYLKQPPALTPSSNPAASAGL). Positions 263–274 (AHPHHHHHHHVP) are enriched in basic residues. Over residues 293-308 (GPGGVGAAGGGGGGDY) the composition is skewed to gly residues. The segment covering 309 to 323 (GPDSSSSPVPSSPAM) has biased composition (low complexity).

In terms of assembly, interacts with the transcription factors TBP and TFIIB. Lung and placenta. Predominantly expressed in gastrointestinal tract including stomach.

The protein resides in the nucleus. Probable transcription activator for a number of lung-specific genes. Mediates up-regulation of the E3 ligase IRF2BPL and drives ubiquitination and degradation of CTNNB1. The protein is Forkhead box protein F2 (FOXF2) of Homo sapiens (Human).